The following is a 395-amino-acid chain: Beta-1,4-galactosyltransferase 3 (395 aa).

The Cytoplasmic segment spans residues 1–10; that stretch reads MLRRLLERPC. The chain crosses the membrane as a helical; Signal-anchor for type II membrane protein span at residues 11–31; the sequence is TLALLVGSQLAVMMYLSLGGF. At 32-395 the chain is on the lumenal side; that stretch reads RSLSALFGRD…ANHTAPHGSH (364 aa). Asn57 carries an N-linked (GlcNAc...) asparagine glycan. Cys79 and Cys121 form a disulfide bridge. 132-136 contacts UDP-alpha-D-galactose; the sequence is PHRAR. Asn168 is a glycosylation site (N-linked (GlcNAc...) asparagine). UDP-alpha-D-galactose is bound by residues 171-173, 198-199, Tyr228, and Trp260; these read FNR and VD. A disulfide bridge links Cys192 with Cys211. Asp199 is a Mn(2+) binding site. 262–265 contacts N-acetyl-D-glucosamine; the sequence is GEDD. Mn(2+) is bound at residue His293. A UDP-alpha-D-galactose-binding site is contributed by 293–295; sequence HRG. Arg305 is a binding site for N-acetyl-D-glucosamine. Asn339 and Asn387 each carry an N-linked (GlcNAc...) asparagine glycan. Residues 341–395 form a disordered region; sequence TADIGTDPRGPRAPSGPRYPPGSSQAFRQEMLQRRPPARPGPLPTANHTAPHGSH.

Belongs to the glycosyltransferase 7 family. It depends on Mn(2+) as a cofactor.

The protein resides in the golgi apparatus. It localises to the golgi stack membrane. It catalyses the reaction an N-acetyl-beta-D-glucosaminyl derivative + UDP-alpha-D-galactose = a beta-D-galactosyl-(1-&gt;4)-N-acetyl-beta-D-glucosaminyl derivative + UDP + H(+). The catalysed reaction is N-acetyl-D-glucosamine + UDP-alpha-D-galactose = beta-D-galactosyl-(1-&gt;4)-N-acetyl-D-glucosamine + UDP + H(+). The enzyme catalyses a beta-D-GlcNAc-(1-&gt;3)-beta-D-Gal-(1-&gt;4)-beta-D-Glc-(1&lt;-&gt;1)-Cer(d18:1(4E)) + UDP-alpha-D-galactose = a neolactoside nLc4Cer(d18:1(4E)) + UDP + H(+). It carries out the reaction a beta-D-glucosylceramide + UDP-alpha-D-galactose = a beta-D-galactosyl-(1-&gt;4)-beta-D-glucosyl-(1&lt;-&gt;1)-ceramide + UDP + H(+). It catalyses the reaction a neolactoside IV(3)-beta-GlcNAc-nLc4Cer + UDP-alpha-D-galactose = a neolactoside nLc6Cer + UDP + H(+). It participates in protein modification; protein glycosylation. Its function is as follows. Responsible for the synthesis of complex-type N-linked oligosaccharides in many glycoproteins as well as the carbohydrate moieties of glycolipids. In Rattus norvegicus (Rat), this protein is Beta-1,4-galactosyltransferase 3.